Consider the following 354-residue polypeptide: tRNA N6-adenosine threonylcarbamoyltransferase (354 aa).

2 residues coordinate Fe cation: H111 and H115. Substrate is bound by residues 134–138 (LVSGG), D167, G180, and N279. Fe cation is bound at residue D319.

This sequence belongs to the KAE1 / TsaD family. The cofactor is Fe(2+).

The protein localises to the cytoplasm. The enzyme catalyses L-threonylcarbamoyladenylate + adenosine(37) in tRNA = N(6)-L-threonylcarbamoyladenosine(37) in tRNA + AMP + H(+). Required for the formation of a threonylcarbamoyl group on adenosine at position 37 (t(6)A37) in tRNAs that read codons beginning with adenine. Is involved in the transfer of the threonylcarbamoyl moiety of threonylcarbamoyl-AMP (TC-AMP) to the N6 group of A37, together with TsaE and TsaB. TsaD likely plays a direct catalytic role in this reaction. The polypeptide is tRNA N6-adenosine threonylcarbamoyltransferase (Neisseria meningitidis).